Here is a 107-residue protein sequence, read N- to C-terminus: Holo-[acyl-carrier-protein] synthase (107 aa).

Positions 10 and 54 each coordinate Mg(2+).

This sequence belongs to the P-Pant transferase superfamily. AcpS family. Mg(2+) is required as a cofactor.

It localises to the cytoplasm. It catalyses the reaction apo-[ACP] + CoA = holo-[ACP] + adenosine 3',5'-bisphosphate + H(+). In terms of biological role, transfers the 4'-phosphopantetheine moiety from coenzyme A to a Ser of acyl-carrier-protein. This chain is Holo-[acyl-carrier-protein] synthase, found in Mycoplasma mobile (strain ATCC 43663 / 163K / NCTC 11711) (Mesomycoplasma mobile).